Here is a 397-residue protein sequence, read N- to C-terminus: Putative efflux system protein YvrP (397 aa).

The chain crosses the membrane as a helical span at residues 8–28 (LIGGAICAGVLVLAGIGAGGF). A coiled-coil region spans residues 106-183 (EDHSDEVEQA…KELAGLTKNK (78 aa)).

It belongs to the membrane fusion protein (MFP) (TC 8.A.1) family.

The protein localises to the cell membrane. In Bacillus subtilis (strain 168), this protein is Putative efflux system protein YvrP (yvrP).